The following is a 342-amino-acid chain: Autoinducer 2 import system permease protein LsrC (342 aa).

The Periplasmic segment spans residues 1-13; the sequence is MLKFIQNNREITA. Residues 14–34 form a helical membrane-spanning segment; sequence LLAVVLLFVLPGFLDRQYLSV. Residues 35-38 lie on the Cytoplasmic side of the membrane; sequence QTLT. A helical membrane pass occupies residues 39-59; the sequence is MVYSSAQILILLAMGATLVML. Residues 60–69 lie on the Periplasmic side of the membrane; the sequence is TRNIDVSVGS. A helical transmembrane segment spans residues 70 to 90; the sequence is ITGMCAVLLGMLLNAGYSLPV. The Cytoplasmic portion of the chain corresponds to 91–92; that stretch reads AC. A helical membrane pass occupies residues 93-113; it reads VTTLLLGLLAGFFNGVLVAWL. Position 114 (Lys-114) is a topological domain, periplasmic. Residues 115-135 form a helical membrane-spanning segment; it reads IPAIVATLGTLGLYRGIMLLW. Residues 136 to 154 are Cytoplasmic-facing; the sequence is TGGKWIEGLPAELKQLSAP. The chain crosses the membrane as a helical span at residues 155–175; the sequence is LLFGVSAIGWLTIILVAFMAW. At 176–212 the chain is on the periplasmic side; sequence LLAKTAFGRSFYATGDNLQGARQLGVRTEAIRIVAFS. The chain crosses the membrane as a helical span at residues 213–233; the sequence is LNGCMAALAGIVFASQIGFIP. At 234–251 the chain is on the cytoplasmic side; the sequence is NQTGTGLEMKAIAACVLG. The chain crosses the membrane as a helical span at residues 252–272; it reads GISLLGGSGAIIGAVLGAWFL. Topologically, residues 273 to 283 are periplasmic; the sequence is TQIDSVLVLLR. A helical membrane pass occupies residues 284–304; that stretch reads IPAWWNDFIAGLVLLAVLVFD. At 305–342 the chain is on the cytoplasmic side; the sequence is GRLRCALERNLRRQKYARFMTPPPSVKPASSGKKREAA.

Belongs to the binding-protein-dependent transport system permease family. AraH/RbsC subfamily. As to quaternary structure, the complex is composed of two ATP-binding proteins (LsrA), two transmembrane proteins (LsrC and LsrD) and a solute-binding protein (LsrB).

The protein localises to the cell inner membrane. Its function is as follows. Part of the ABC transporter complex LsrABCD involved in autoinducer 2 (AI-2) import. Probably responsible for the translocation of the substrate across the membrane. In Escherichia coli O9:H4 (strain HS), this protein is Autoinducer 2 import system permease protein LsrC (lsrC).